The chain runs to 328 residues: GMP reductase (328 aa).

Cysteine 176 functions as the Thioimidate intermediate in the catalytic mechanism. NADP(+) is bound at residue 205-228 (IIADGGIRTHGDIAKSIRFGASMI).

It belongs to the IMPDH/GMPR family. GuaC type 2 subfamily.

The catalysed reaction is IMP + NH4(+) + NADP(+) = GMP + NADPH + 2 H(+). Its function is as follows. Catalyzes the irreversible NADPH-dependent deamination of GMP to IMP. It functions in the conversion of nucleobase, nucleoside and nucleotide derivatives of G to A nucleotides, and in maintaining the intracellular balance of A and G nucleotides. The protein is GMP reductase of Streptococcus pneumoniae serotype 19F (strain G54).